Here is a 213-residue protein sequence, read N- to C-terminus: Uridine kinase (213 aa).

Position 15–22 (15–22 (GASASGKS)) interacts with ATP.

Belongs to the uridine kinase family.

Its subcellular location is the cytoplasm. It catalyses the reaction uridine + ATP = UMP + ADP + H(+). The catalysed reaction is cytidine + ATP = CMP + ADP + H(+). Its pathway is pyrimidine metabolism; CTP biosynthesis via salvage pathway; CTP from cytidine: step 1/3. It participates in pyrimidine metabolism; UMP biosynthesis via salvage pathway; UMP from uridine: step 1/1. This Cronobacter sakazakii (strain ATCC BAA-894) (Enterobacter sakazakii) protein is Uridine kinase.